The chain runs to 437 residues: Adenylosuccinate synthetase (437 aa).

GTP contacts are provided by residues 13–19 (GDEGKGK) and 41–43 (GHT). Asp-14 acts as the Proton acceptor in catalysis. Mg(2+) contacts are provided by Asp-14 and Gly-41. IMP-binding positions include 14-17 (DEGK), 39-42 (NAGH), Thr-130, Arg-144, Gln-225, Thr-240, and Arg-310. Residue His-42 is the Proton donor of the active site. 306–312 (ATTGRLR) is a substrate binding site. GTP is bound by residues Arg-312, 338–340 (KLD), and 421–423 (STG).

It belongs to the adenylosuccinate synthetase family. Homodimer. Mg(2+) is required as a cofactor.

The protein localises to the cytoplasm. The enzyme catalyses IMP + L-aspartate + GTP = N(6)-(1,2-dicarboxyethyl)-AMP + GDP + phosphate + 2 H(+). It functions in the pathway purine metabolism; AMP biosynthesis via de novo pathway; AMP from IMP: step 1/2. Functionally, plays an important role in the de novo pathway of purine nucleotide biosynthesis. Catalyzes the first committed step in the biosynthesis of AMP from IMP. The chain is Adenylosuccinate synthetase from Psychromonas ingrahamii (strain DSM 17664 / CCUG 51855 / 37).